The chain runs to 349 residues: UDP-N-acetylenolpyruvoylglucosamine reductase (349 aa).

One can recognise an FAD-binding PCMH-type domain in the interval 24–197 (FGIDATARFA…VAVTFRLPKR (174 aa)). Residue Arg173 is part of the active site. Ser249 serves as the catalytic Proton donor. Residue Glu345 is part of the active site.

Belongs to the MurB family. FAD serves as cofactor.

The protein resides in the cytoplasm. It carries out the reaction UDP-N-acetyl-alpha-D-muramate + NADP(+) = UDP-N-acetyl-3-O-(1-carboxyvinyl)-alpha-D-glucosamine + NADPH + H(+). It participates in cell wall biogenesis; peptidoglycan biosynthesis. Functionally, cell wall formation. The chain is UDP-N-acetylenolpyruvoylglucosamine reductase from Burkholderia ambifaria (strain ATCC BAA-244 / DSM 16087 / CCUG 44356 / LMG 19182 / AMMD) (Burkholderia cepacia (strain AMMD)).